The sequence spans 136 residues: Photosystem II extrinsic protein U (136 aa).

The signal sequence occupies residues 1 to 28 (MKQLAQRLFSLALVLALVLGISVQSAQA).

Belongs to the PsbU family. In terms of assembly, PSII is composed of 1 copy each of membrane proteins PsbA, PsbB, PsbC, PsbD, PsbE, PsbF, PsbH, PsbI, PsbJ, PsbK, PsbL, PsbM, PsbT, PsbX, PsbY, PsbZ, Psb30/Ycf12, peripheral proteins PsbO, CyanoQ (PsbQ), PsbU, PsbV and a large number of cofactors. It forms dimeric complexes.

It localises to the cellular thylakoid membrane. Functionally, one of the extrinsic, lumenal subunits of photosystem II (PSII). PSII is a light-driven water plastoquinone oxidoreductase, using light energy to abstract electrons from H(2)O, generating a proton gradient subsequently used for ATP formation. The extrinsic proteins stabilize the structure of photosystem II oxygen-evolving complex (OEC), the ion environment of oxygen evolution and protect the OEC against heat-induced inactivation. The polypeptide is Photosystem II extrinsic protein U (Synechococcus elongatus (strain ATCC 33912 / PCC 7942 / FACHB-805) (Anacystis nidulans R2)).